The following is a 580-amino-acid chain: 2-succinyl-5-enolpyruvyl-6-hydroxy-3-cyclohexene-1-carboxylate synthase (580 aa).

The protein belongs to the TPP enzyme family. MenD subfamily. In terms of assembly, homodimer. Requires Mg(2+) as cofactor. It depends on Mn(2+) as a cofactor. Thiamine diphosphate is required as a cofactor.

It carries out the reaction isochorismate + 2-oxoglutarate + H(+) = 5-enolpyruvoyl-6-hydroxy-2-succinyl-cyclohex-3-ene-1-carboxylate + CO2. It participates in quinol/quinone metabolism; 1,4-dihydroxy-2-naphthoate biosynthesis; 1,4-dihydroxy-2-naphthoate from chorismate: step 2/7. Its pathway is quinol/quinone metabolism; menaquinone biosynthesis. Catalyzes the thiamine diphosphate-dependent decarboxylation of 2-oxoglutarate and the subsequent addition of the resulting succinic semialdehyde-thiamine pyrophosphate anion to isochorismate to yield 2-succinyl-5-enolpyruvyl-6-hydroxy-3-cyclohexene-1-carboxylate (SEPHCHC). This is 2-succinyl-5-enolpyruvyl-6-hydroxy-3-cyclohexene-1-carboxylate synthase from Listeria monocytogenes serotype 4b (strain F2365).